The chain runs to 39 residues: Cytochrome b559 subunit beta (39 aa).

The helical transmembrane segment at 14 to 30 threads the bilayer; the sequence is WLAIHGLAVPTVFFLGS. His18 is a binding site for heme.

It belongs to the PsbE/PsbF family. As to quaternary structure, heterodimer of an alpha subunit and a beta subunit. PSII is composed of 1 copy each of membrane proteins PsbA, PsbB, PsbC, PsbD, PsbE, PsbF, PsbH, PsbI, PsbJ, PsbK, PsbL, PsbM, PsbT, PsbX, PsbY, PsbZ, Psb30/Ycf12, at least 3 peripheral proteins of the oxygen-evolving complex and a large number of cofactors. It forms dimeric complexes. Requires heme b as cofactor.

The protein localises to the plastid. Its subcellular location is the chloroplast thylakoid membrane. Functionally, this b-type cytochrome is tightly associated with the reaction center of photosystem II (PSII). PSII is a light-driven water:plastoquinone oxidoreductase that uses light energy to abstract electrons from H(2)O, generating O(2) and a proton gradient subsequently used for ATP formation. It consists of a core antenna complex that captures photons, and an electron transfer chain that converts photonic excitation into a charge separation. The chain is Cytochrome b559 subunit beta from Psilotum nudum (Whisk fern).